A 606-amino-acid polypeptide reads, in one-letter code: R-linalool synthase, chloroplastic (606 aa).

A chloroplast-targeting transit peptide spans 1–51 (MCTIISVNHHHVAILSKPKVKLFHTKNKRSASINLPWSLSPSSSAASRPIS). Residues Arg326, Asp363, Asp367, Arg504, and Asp507 each coordinate (2E)-geranyl diphosphate. Mg(2+) is bound by residues Asp363 and Asp367. The short motif at 363-367 (DDVYD) is the DDXXD motif element. Mg(2+) contacts are provided by Asp507, Thr511, and Glu515.

The protein belongs to the terpene synthase family. Tpsb subfamily. Mg(2+) is required as a cofactor. It depends on Mn(2+) as a cofactor.

The protein resides in the plastid. The protein localises to the chloroplast. The enzyme catalyses (2E)-geranyl diphosphate + H2O = (R)-linalool + diphosphate. Its pathway is secondary metabolite biosynthesis; terpenoid biosynthesis. Functionally, monoterpene synthase that catalyzes the formation of (3R)-linalool from geranyl diphosphate, but not from farnesyl diphosphate or geranylgeranyl diphosphate. This Mentha aquatica (Water mint) protein is R-linalool synthase, chloroplastic.